A 556-amino-acid polypeptide reads, in one-letter code: Sesquiterpene synthase 2 (556 aa).

Mg(2+)-binding residues include Asp309, Asp313, Asp453, and Glu461. Residues 309–313 (DDIYD) carry the DDXXD motif motif.

Belongs to the terpene synthase family. Tpsa subfamily. Requires Mg(2+) as cofactor. Mn(2+) is required as a cofactor. Mostly expressed in roots and mature leaflets and, to a lower extent, in rachis and developing leaflets.

The enzyme catalyses (2E,6E)-farnesyl diphosphate = alpha-humulene + diphosphate. It catalyses the reaction (2E,6E)-farnesyl diphosphate = alpha-selinene + diphosphate. The catalysed reaction is (2E,6E)-farnesyl diphosphate = delta-cadinene + diphosphate. It carries out the reaction (2E,6E)-farnesyl diphosphate = (1S,2S,4R)-beta-elemene + diphosphate. Its pathway is secondary metabolite biosynthesis; terpenoid biosynthesis. Sesquiterpene synthase involved in the biosynthesis of volatile compounds known for their medicinal efficacy for treating enteritis, dysentery, itch and some cancers. Mediates the conversion of (2E,6E)-farnesyl diphosphate (FPP) into beta-elemene, alpha-humulene, delta-cadinene and alpha-selinene. In Toona sinensis (Chinese mahogany), this protein is Sesquiterpene synthase 2.